Consider the following 257-residue polypeptide: UPF0246 protein Ent638_0568 (257 aa).

It belongs to the UPF0246 family.

The protein is UPF0246 protein Ent638_0568 of Enterobacter sp. (strain 638).